The sequence spans 149 residues: Urease accessory protein UreE (149 aa).

This sequence belongs to the UreE family.

Its subcellular location is the cytoplasm. Its function is as follows. Involved in urease metallocenter assembly. Binds nickel. Probably functions as a nickel donor during metallocenter assembly. This Ureaplasma urealyticum serovar 10 (strain ATCC 33699 / Western) protein is Urease accessory protein UreE.